We begin with the raw amino-acid sequence, 195 residues long: 3-isopropylmalate dehydratase small subunit (195 aa).

This sequence belongs to the LeuD family. LeuD type 1 subfamily. Heterodimer of LeuC and LeuD.

It catalyses the reaction (2R,3S)-3-isopropylmalate = (2S)-2-isopropylmalate. It participates in amino-acid biosynthesis; L-leucine biosynthesis; L-leucine from 3-methyl-2-oxobutanoate: step 2/4. Catalyzes the isomerization between 2-isopropylmalate and 3-isopropylmalate, via the formation of 2-isopropylmaleate. This Frankia alni (strain DSM 45986 / CECT 9034 / ACN14a) protein is 3-isopropylmalate dehydratase small subunit.